The chain runs to 176 residues: Transcription factor 21 (176 aa).

The disordered stretch occupies residues 1-84; sequence MSTGSISDVD…QVQRNAANAR (84 aa). Positions 31 to 44 are enriched in polar residues; it reads GTSNESTEDSSNCE. One can recognise a bHLH domain in the interval 76–128; sequence VQRNAANARERARMRVLSKAFSRLKTTLPWVPPDTKLSKLDTLRLASSYIAHL.

Efficient DNA binding requires dimerization with another bHLH protein. As to expression, expressed in the cranial paraxial mesoderm from 20 hpf and subsequently becomes restricted to the pharyngeal mesoderm that will form the muscle. Expression in the proepicardial organ is first seen at 40hpf in a cluster of cells between the myocardium and yolk. Also expressed in the developing arches. Expression begins to surround the heart by day 3 of development, and by 96 hpf, expression is restricted to the outer epicardial layer surrounding the myocardium.

The protein resides in the nucleus. In terms of biological role, involved in epithelial-mesenchymal interactions in kidney and lung morphogenesis that include epithelial differentiation and branching morphogenesis. The polypeptide is Transcription factor 21 (Danio rerio (Zebrafish)).